The chain runs to 699 residues: Polyribonucleotide nucleotidyltransferase (699 aa).

Residues aspartate 485 and aspartate 491 each contribute to the Mg(2+) site. In terms of domain architecture, KH spans 552–611; that stretch reads PRITTIKINPEKIRDVIGKGGAVIRALTEETGTTIELEDDGTVKIASSNGEATKEAIRRI. Residues 621 to 689 form the S1 motif domain; sequence GRIYNGKVIR…RQGRVRLSIK (69 aa).

The protein belongs to the polyribonucleotide nucleotidyltransferase family. In terms of assembly, component of the RNA degradosome, which is a multiprotein complex involved in RNA processing and mRNA degradation. Requires Mg(2+) as cofactor.

The protein resides in the cytoplasm. It catalyses the reaction RNA(n+1) + phosphate = RNA(n) + a ribonucleoside 5'-diphosphate. Its function is as follows. Involved in mRNA degradation. Catalyzes the phosphorolysis of single-stranded polyribonucleotides processively in the 3'- to 5'-direction. This is Polyribonucleotide nucleotidyltransferase from Shewanella oneidensis (strain ATCC 700550 / JCM 31522 / CIP 106686 / LMG 19005 / NCIMB 14063 / MR-1).